The sequence spans 326 residues: N-(2-amino-2-carboxyethyl)-L-glutamate synthase (326 aa).

The residue at position 47 (K47) is an N6-(pyridoxal phosphate)lysine. Pyridoxal 5'-phosphate contacts are provided by residues N77, 185–189 (STTGS), and S272.

It belongs to the cysteine synthase/cystathionine beta-synthase family. SbnA subfamily. Homodimer. Pyridoxal 5'-phosphate is required as a cofactor.

The catalysed reaction is O-phospho-L-serine + L-glutamate = N-[(2S)-2-amino-2-carboxyethyl]-L-glutamate + phosphate + H(+). It functions in the pathway siderophore biosynthesis. Functionally, catalyzes the synthesis of N-((2S)-2-amino-2-carboxyethyl)-L-glutamate (ACEGA) from O-phospho-L-serine and L-glutamate. Involved in the biosynthesis of L-2,3-diaminopropionic acid (L-Dap), a precursor of staphyloferrin B and antibiotics. The polypeptide is N-(2-amino-2-carboxyethyl)-L-glutamate synthase (sbnA) (Staphylococcus aureus (strain COL)).